Reading from the N-terminus, the 345-residue chain is MTATNKQVILKDYVSGFPTESDFDFTTTTVELRVPEGTNSVLVKNLYLSCDPYMRIRMGKPDPSTAALAQAYTPGQPIQGYGVSRIIESGHPDYKKGDLLWGIVAWEEYSVITPMTHAHFKIQHTDVPLSYYTGLLGMPGMTAYAGFYEVCSPKEGETVYVSAASGAVGQLVGQLAKMMGCYVVGSAGSKEKVDLLKTKFGFDDAFNYKEESDLTAALKRCFPNGIDIYFENVGGKMLDAVLVNMNMHGRIAVCGMISQYNLENQEGVHNLSNIIYKRIRIQGFVVSDFYDKYSKFLEFVLPHIREGKITYVEDVADGLEKAPEALVGLFHGKNVGKQVVVVARE.

NADP(+) contacts are provided by residues 52-53, 163-169, G188, K192, Y208, N232, C254, Y260, 284-286, F330, and 334-336; these read PY, AASGAVG, FVV, and NVG. Residue Y53 coordinates substrate. Y260 provides a ligand contact to substrate.

It belongs to the NADP-dependent oxidoreductase L4BD family. As to quaternary structure, homodimer. In terms of tissue distribution, expressed in leaves.

Its subcellular location is the cytoplasm. The protein localises to the nucleus. The protein resides in the nucleoplasm. It catalyses the reaction an n-alkanal + NAD(+) = an alk-2-enal + NADH + H(+). The enzyme catalyses an n-alkanal + NADP(+) = an alk-2-enal + NADPH + H(+). Its activity is regulated as follows. Inhibited by N-ethylmaleimide and p-chloromercuribenzoic acid. Functionally, involved in the detoxification of reactive carbonyls. Acts on lipid peroxide-derived reactive aldehydes. Specific to a double bond activated by an adjacent carbonyl group. Can use both quinones and diamide as substrates, but not menadione, ferricyanide or phylloquinone. Can use 4-hydroxy-(2E)-nonenal (HNE), 4-hydroxy-(2E)-hexenal (HHE), (2E)-nonenal, (2E)-hexenal, (2E)-pentenal, propenal (acrolein), 3-buten-2-one and 3-penten-2-one, but not (R)-(-)-carvone, n-nonanal, n-hexanal, (3Z)-hexanal, cyclohex-2-en-1-one or 12-oxo phytodienoic acid (OPDA) as electron acceptors. Catalyzes the reduction of the alpha,beta-unsaturated bond of 2-alkenals, of lipid peroxide-derived oxenes 9-oxo-10(E),12(Z)-octadecadienoic acid (9-KODE) and 13-oxo-9(Z),11(E)-octadecadienoic acid (13-KODE), as well as 4-oxo-(2E)-nonenal and 4-hydroxynonenal. Can use 12-oxo-10(E) dodecanoate (traumatin), trans-1,3 diphenyl-2-propenone, trans-1,4-diphenyl-2-butene-1,4-dione, 9-oxo-12,13-epoxy-(10E)-octadecenoic acid (trans-EKODE-1b) and 9,13-dihydroxy-10-oxo-11-octadecenoic acid as substrates. Catalyzes the reduction of the 7-8 double bond of phenylpropanal substrates, such as p-coumaryl aldehyde and coniferyl aldehyde (in vitro). Has activity towards toxic substrates, such as 4-hydroxy-(2E)-nonenal (in vitro). May play a distinct role in plant antioxidant defense and is possibly involved in NAD(P)/NAD(P)H homeostasis. The chain is NADPH-dependent oxidoreductase 2-alkenal reductase from Arabidopsis thaliana (Mouse-ear cress).